The following is a 51-amino-acid chain: Large ribosomal subunit protein eL39 (51 aa).

Belongs to the eukaryotic ribosomal protein eL39 family.

This chain is Large ribosomal subunit protein eL39, found in Pyrobaculum neutrophilum (strain DSM 2338 / JCM 9278 / NBRC 100436 / V24Sta) (Thermoproteus neutrophilus).